A 564-amino-acid chain; its full sequence is Septation ring formation regulator EzrA (564 aa).

The Extracellular segment spans residues 1–4 (MVLF). Residues 5–23 (IILAILVVILIAIGVLFYM) traverse the membrane as a helical segment. Residues 24 to 564 (RSNKRNLIEK…KHIEEQVIKE (541 aa)) lie on the Cytoplasmic side of the membrane. Coiled-coil stretches lie at residues 84-126 (VEEK…HQVT), 165-223 (EAAE…LIRE), 271-303 (MISR…YEVK), and 350-435 (VRQF…RRLL).

The protein belongs to the EzrA family.

The protein localises to the cell membrane. Functionally, negative regulator of FtsZ ring formation; modulates the frequency and position of FtsZ ring formation. Inhibits FtsZ ring formation at polar sites. Interacts either with FtsZ or with one of its binding partners to promote depolymerization. The sequence is that of Septation ring formation regulator EzrA from Staphylococcus epidermidis (strain ATCC 12228 / FDA PCI 1200).